The following is a 311-amino-acid chain: Aspartate carbamoyltransferase catalytic subunit (311 aa).

The carbamoyl phosphate site is built by R55 and T56. An L-aspartate-binding site is contributed by K85. Residues R106, H135, and Q138 each coordinate carbamoyl phosphate. Residues R168 and R230 each contribute to the L-aspartate site. Residues L268 and P269 each contribute to the carbamoyl phosphate site.

This sequence belongs to the aspartate/ornithine carbamoyltransferase superfamily. ATCase family. In terms of assembly, heterododecamer (2C3:3R2) of six catalytic PyrB chains organized as two trimers (C3), and six regulatory PyrI chains organized as three dimers (R2).

It catalyses the reaction carbamoyl phosphate + L-aspartate = N-carbamoyl-L-aspartate + phosphate + H(+). It participates in pyrimidine metabolism; UMP biosynthesis via de novo pathway; (S)-dihydroorotate from bicarbonate: step 2/3. Catalyzes the condensation of carbamoyl phosphate and aspartate to form carbamoyl aspartate and inorganic phosphate, the committed step in the de novo pyrimidine nucleotide biosynthesis pathway. The polypeptide is Aspartate carbamoyltransferase catalytic subunit (Yersinia pseudotuberculosis serotype O:1b (strain IP 31758)).